Reading from the N-terminus, the 808-residue chain is MAAPEAWRARSCWFCEVAAATTMEATSREAAPAKSSASGPSAPPALFELCGRAVSAHMGVLESGVWALPGPILQSILPLLNIYYLERIEETALKKGLSTQAIWRRLWDELMKTRPSSLESVTCWRAKFMEAFFSHVLRGTIDVSSDKRLCDQRFSPLLHSSRHVRQLTICNMLQGATELVAEPNRRVLETLASSLHTLKFRHLLFSDVAAQQSLRQLLHQLIHHGAVSQVSLYSWPVPESALFILILTMSAGFWQPGPGSLPCRLCGEASRGRAPSRDEGSLLLGSRRPRRDAAERCAAALMATRRKSEVKQVPRALPTSRVTRRSTQESLTIGGTDSKRELYPPATSYEASGTKQPSSAPTAASSSTSSKRAPASSVSQPKPLKRFKRATGKKGPRTRQGSGAESEDLYDFVFIVAGEKEDGEEMEIGEVACGALDGSDPSCLGLPALEASQRFRSISTLELFTVPLSTEAALTLCHLLSSWVSLESLTLSYNGLGSNIFRLLDSLRVLSGQAGCRLRALHLSDLFSPLPILELTRAIVRALPLLRVLSIRVDHPSQRDNPAVPENAGPPGHIIGDEEIPENCLEQLEMGFPRGAQPAPLLCSVLKASGSLQQLSLDSATFASPQDFGLVLQTLKEYNLSLKRLSFHDMNLADCQSEVLFLLKNLTLQEITFSFCRLFEKRPAQFLPEMVAAMKGNSTLKGLRLPGNRLGNAGLLALADVFSEDSSSSLCQLDISSNCIKPDGLLEFAKRLERWGRGAFGHLRLFQNWLDQDAVTAREAIRRLRATCHVVSDSWDSTQAFADYVSTM.

Residues 45 to 54 form an interaction with Elongin BC complex region; that stretch reads ALFELCGRAV. 3 positions are modified to phosphoserine: Ser155, Ser276, and Ser326. 2 disordered regions span residues 269–289 and 304–404; these read ASRG…SRRP and TRRK…GSGA. Phosphothreonine is present on Thr327. Low complexity predominate over residues 357–379; that stretch reads PSSAPTAASSSTSSKRAPASSVS. Ser369 bears the Phosphoserine mark. Over residues 383-397 the composition is skewed to basic residues; it reads PLKRFKRATGKKGPR. LRR repeat units lie at residues 483–503, 514–526, 527–551, 609–631, 632–655, 697–724, and 727–748; these read WVSL…IFRL, AGCR…LSDL, FSPL…VLSI, SGSL…FGLV, LQTL…LADC, NSTL…VFSE, and SSSL…LLEF.

Part of an E3 ubiquitin-protein ligase complex with Elongin BC (ELOB and ELOC), RBX1 and CUL5. Component of a probable ECS(LRRC41) complex which contains CUL5, RNF7/RBX2, Elongin BC and LRRC41. Interacts with CUL5, RNF7, ELOB and ELOC.

It participates in protein modification; protein ubiquitination. Probable substrate recognition component of an ECS (Elongin BC-CUL2/5-SOCS-box protein) E3 ubiquitin ligase complex which mediates the ubiquitination and subsequent proteasomal degradation of target proteins. This is Leucine-rich repeat-containing protein 41 (Lrrc41) from Rattus norvegicus (Rat).